A 129-amino-acid chain; its full sequence is Small ribosomal subunit protein uS11 (129 aa).

This sequence belongs to the universal ribosomal protein uS11 family. In terms of assembly, part of the 30S ribosomal subunit. Interacts with proteins S7 and S18. Binds to IF-3.

Located on the platform of the 30S subunit, it bridges several disparate RNA helices of the 16S rRNA. Forms part of the Shine-Dalgarno cleft in the 70S ribosome. The chain is Small ribosomal subunit protein uS11 from Aromatoleum aromaticum (strain DSM 19018 / LMG 30748 / EbN1) (Azoarcus sp. (strain EbN1)).